Consider the following 495-residue polypeptide: Sialin (495 aa).

The tract at residues 1–24 (MKSPVSDLAPSDGEEGSDRTPLLQ) is disordered. At Ser3 the chain carries Phosphoserine. Positions 22–23 (LL) match the Dileucine internalization motif motif. The chain crosses the membrane as a helical span at residues 42 to 62 (LAFLSFFGFFVLYSLRVNLSV). Asn71, Asn77, and Asn95 each carry an N-linked (GlcNAc...) asparagine glycan. The next 11 membrane-spanning stretches (helical) occupy residues 110 to 130 (WILG…GYVA), 137 to 157 (LLLG…PLAA), 159 to 179 (FGVG…GVTY), 201 to 221 (ISYA…GVIC), 228 to 248 (YVFY…ICLV), 289 to 309 (LPLW…YTLL), 329 to 349 (FLSA…GQAA), 366 to 386 (VFSL…GFIG), 392 to 412 (AVAF…GFSI), 424 to 444 (ILLG…PIIA), and 458 to 478 (TVFC…TLFA).

The protein belongs to the major facilitator superfamily. Sodium/anion cotransporter family. In terms of tissue distribution, significantly expressed in lung endothelial cells, and much less in liver.

Its subcellular location is the basolateral cell membrane. The protein resides in the cytoplasmic vesicle. The protein localises to the secretory vesicle. It is found in the synaptic vesicle membrane. It localises to the lysosome membrane. It catalyses the reaction N-acetylneuraminate(in) + H(+)(in) = N-acetylneuraminate(out) + H(+)(out). The enzyme catalyses D-glucuronate(out) + H(+)(out) = D-glucuronate(in) + H(+)(in). The catalysed reaction is 2 nitrate(out) + H(+)(out) = 2 nitrate(in) + H(+)(in). It carries out the reaction L-aspartate(out) = L-aspartate(in). It catalyses the reaction L-glutamate(out) = L-glutamate(in). The enzyme catalyses N-acetyl-L-aspartyl-L-glutamate(out) = N-acetyl-L-aspartyl-L-glutamate(in). In terms of biological role, multifunctional anion transporter that operates via two distinct transport mechanisms, namely proton-coupled anion cotransport and membrane potential-dependent anion transport. Electroneutral proton-coupled acidic monosaccharide symporter, with a sugar to proton stoichiometry of 1:1. Exports glucuronic acid and free sialic acid derived from sialoglycoconjugate degradation out of lysosomes, driven by outwardly directed lysosomal pH gradient. May regulate lysosome function and metabolism of sialylated conjugates that impact oligodendrocyte lineage differentiation and myelinogenesis in the central nervous system. Electrogenic proton-coupled nitrate symporter that transports nitrate ions across the basolateral membrane of salivary gland acinar cells, with nitrate to proton stoichiometry of 2:1. May contribute to nitrate clearance from serum by salivary glands, where it is further concentrated and secreted in the saliva. Uses membrane potential to drive the uptake of acidic amino acids and peptides into synaptic vesicles. Responsible for synaptic vesicular storage of L-aspartate and L-glutamate in pinealocytes as well as vesicular uptake of N-acetyl-L-aspartyl-L-glutamate neuropeptide, relevant to aspartegic-associated glutamatergic neurotransmission and activation of metabotropic receptors that inhibit subsequent transmitter release. Receptor for CM101, a polysaccharide produced by group B Streptococcus with antipathoangiogenic properties. This chain is Sialin (SLC17A5), found in Ovis aries (Sheep).